The following is a 154-amino-acid chain: PHA granule-associated protein PhaP (154 aa).

It is found in the cytoplasmic granule. In terms of biological role, polyhydroxyalkanoate (PHA) granule structural protein. Important for PHA granule formation and separation, and for cell growth. The chain is PHA granule-associated protein PhaP (phaP) from Haloferax mediterranei (strain ATCC 33500 / DSM 1411 / JCM 8866 / NBRC 14739 / NCIMB 2177 / R-4) (Halobacterium mediterranei).